The primary structure comprises 206 residues: Probable chemoreceptor glutamine deamidase CheD 1 (206 aa).

It belongs to the CheD family.

It catalyses the reaction L-glutaminyl-[protein] + H2O = L-glutamyl-[protein] + NH4(+). In terms of biological role, probably deamidates glutamine residues to glutamate on methyl-accepting chemotaxis receptors (MCPs), playing an important role in chemotaxis. The sequence is that of Probable chemoreceptor glutamine deamidase CheD 1 from Shewanella oneidensis (strain ATCC 700550 / JCM 31522 / CIP 106686 / LMG 19005 / NCIMB 14063 / MR-1).